The following is a 266-amino-acid chain: UPF0294 protein YafD (266 aa).

The protein belongs to the UPF0294 family.

The protein localises to the cytoplasm. In Salmonella dublin (strain CT_02021853), this protein is UPF0294 protein YafD.